A 239-amino-acid polypeptide reads, in one-letter code: Tetrahydromethanopterin S-methyltransferase subunit A (239 aa).

Residues 1 to 215 (MADKKAPAAG…EAAMIAKFNS (215 aa)) are Cytoplasmic-facing. A 5-hydroxybenzimidazolylcob(I)amide-binding site is contributed by His85. A helical membrane pass occupies residues 216 to 238 (GYYNGKIQGIAIGLFLSIVIFSL). Position 239 (Leu239) is a topological domain, extracellular.

This sequence belongs to the MtrA family. As to quaternary structure, the complex is composed of 8 subunits; MtrA, MtrB, MtrC, MtrD, MtrE, MtrF, MtrG and MtrH. 5-hydroxybenzimidazolylcob(I)amide is required as a cofactor.

The protein localises to the cell membrane. The catalysed reaction is 5-methyl-5,6,7,8-tetrahydromethanopterin + coenzyme M + 2 Na(+)(in) = 5,6,7,8-tetrahydromethanopterin + methyl-coenzyme M + 2 Na(+)(out). It participates in one-carbon metabolism; methanogenesis from CO(2); methyl-coenzyme M from 5,10-methylene-5,6,7,8-tetrahydromethanopterin: step 2/2. Functionally, part of a complex that catalyzes the formation of methyl-coenzyme M and tetrahydromethanopterin from coenzyme M and methyl-tetrahydromethanopterin. This is an energy-conserving, sodium-ion translocating step. The sequence is that of Tetrahydromethanopterin S-methyltransferase subunit A from Methanococcus maripaludis (strain DSM 14266 / JCM 13030 / NBRC 101832 / S2 / LL).